The following is a 736-amino-acid chain: Eukaryotic translation initiation factor 3 subunit B (736 aa).

Residues 1–94 (MAAVFDDIRL…LFIEFEDAGA (94 aa)) form a sufficient for interaction with HCR1 and TIF32 region. The interval 1-219 (MAAVFDDIRL…GIASWGGPQF (219 aa)) is sufficient for interaction with PIC8. The RRM domain occupies 37–120 (RYVVVDGAPV…HRLWVNGLDD (84 aa)). WD repeat units lie at residues 140–182 (EFEA…PENV), 186–224 (RRNW…RLRR), 226–244 (AHPD…YLVT), 245–284 (FSSE…CVKT), 288–328 (PPQQ…QLLG), 332–375 (MKIE…QSCK), 443–483 (EIKD…VSFY), 511–557 (AIDG…TEKI), 566–604 (ATLR…KAEN), and 616–662 (VREE…QDAM).

Belongs to the eIF-3 subunit B family. Component of the eukaryotic translation initiation factor 3 (eIF-3) complex.

The protein resides in the cytoplasm. Its function is as follows. RNA-binding component of the eukaryotic translation initiation factor 3 (eIF-3) complex, which is involved in protein synthesis of a specialized repertoire of mRNAs and, together with other initiation factors, stimulates binding of mRNA and methionyl-tRNAi to the 40S ribosome. The eIF-3 complex specifically targets and initiates translation of a subset of mRNAs involved in cell proliferation. This chain is Eukaryotic translation initiation factor 3 subunit B, found in Eremothecium gossypii (strain ATCC 10895 / CBS 109.51 / FGSC 9923 / NRRL Y-1056) (Yeast).